Consider the following 257-residue polypeptide: Diphthine synthase (257 aa).

S-adenosyl-L-methionine contacts are provided by residues L9, D86, V89, 114–115 (SI), L166, A207, and H232.

It belongs to the diphthine synthase family. Homodimer.

The enzyme catalyses 2-[(3S)-amino-3-carboxypropyl]-L-histidyl-[translation elongation factor 2] + 3 S-adenosyl-L-methionine = diphthine-[translation elongation factor 2] + 3 S-adenosyl-L-homocysteine + 3 H(+). It participates in protein modification; peptidyl-diphthamide biosynthesis. S-adenosyl-L-methionine-dependent methyltransferase that catalyzes the trimethylation of the amino group of the modified target histidine residue in translation elongation factor 2 (EF-2), to form an intermediate called diphthine. The three successive methylation reactions represent the second step of diphthamide biosynthesis. In Methanocella arvoryzae (strain DSM 22066 / NBRC 105507 / MRE50), this protein is Diphthine synthase.